A 150-amino-acid chain; its full sequence is Lymphocyte antigen 6 complex locus protein G5c (150 aa).

The signal sequence occupies residues 1 to 41 (MRFMAGPAGSQSLGPLCFHSSPQALYTVLLIVLVMMSLVFG). Residues 60 to 150 (LRCYRCLLET…DPQNRGLYTP (91 aa)) enclose the UPAR/Ly6 domain. Cystine bridges form between Cys-62–Cys-89, Cys-65–Cys-74, Cys-81–Cys-107, and Cys-134–Cys-139. Asn-96 is a glycosylation site (N-linked (GlcNAc...) asparagine).

In terms of assembly, forms oligomers. Post-translationally, N-glycosylated. Detected in T-cell lines and fetal and adult lung.

It is found in the secreted. May have a role in hematopoietic cell differentiation. The polypeptide is Lymphocyte antigen 6 complex locus protein G5c (LY6G5C) (Homo sapiens (Human)).